Consider the following 147-residue polypeptide: 3-dehydroquinate dehydratase (147 aa).

Catalysis depends on Y25, which acts as the Proton acceptor. 3 residues coordinate substrate: N76, H82, and D89. The active-site Proton donor is the H102. Residues 103 to 104 (IS) and R113 each bind substrate.

The protein belongs to the type-II 3-dehydroquinase family. As to quaternary structure, homododecamer.

It catalyses the reaction 3-dehydroquinate = 3-dehydroshikimate + H2O. It functions in the pathway metabolic intermediate biosynthesis; chorismate biosynthesis; chorismate from D-erythrose 4-phosphate and phosphoenolpyruvate: step 3/7. Its function is as follows. Catalyzes a trans-dehydration via an enolate intermediate. This is 3-dehydroquinate dehydratase from Mycobacterium tuberculosis (strain ATCC 25177 / H37Ra).